Here is a 227-residue protein sequence, read N- to C-terminus: Cytochrome c oxidase subunit 2 (227 aa).

Residues 1 to 14 (MPYPLQLGFQDATS) are Mitochondrial intermembrane-facing. Residues 15–45 (PIMEELLHFHDHTLMIVFLISSLVLYIITLM) form a helical membrane-spanning segment. Residues 46–59 (LTTKLTHTSTMDAQ) are Mitochondrial matrix-facing. The helical transmembrane segment at 60-87 (EVETVWTILPAVILILIALPSLRILYMM) threads the bilayer. Over 88 to 227 (DEINNPLLTI…HFEDWSTSML (140 aa)) the chain is Mitochondrial intermembrane. His-161, Cys-196, Glu-198, Cys-200, His-204, and Met-207 together coordinate Cu cation. Glu-198 contacts Mg(2+).

The protein belongs to the cytochrome c oxidase subunit 2 family. In terms of assembly, component of the cytochrome c oxidase (complex IV, CIV), a multisubunit enzyme composed of 14 subunits. The complex is composed of a catalytic core of 3 subunits MT-CO1, MT-CO2 and MT-CO3, encoded in the mitochondrial DNA, and 11 supernumerary subunits COX4I, COX5A, COX5B, COX6A, COX6B, COX6C, COX7A, COX7B, COX7C, COX8 and NDUFA4, which are encoded in the nuclear genome. The complex exists as a monomer or a dimer and forms supercomplexes (SCs) in the inner mitochondrial membrane with NADH-ubiquinone oxidoreductase (complex I, CI) and ubiquinol-cytochrome c oxidoreductase (cytochrome b-c1 complex, complex III, CIII), resulting in different assemblies (supercomplex SCI(1)III(2)IV(1) and megacomplex MCI(2)III(2)IV(2)). Found in a complex with TMEM177, COA6, COX18, COX20, SCO1 and SCO2. Interacts with TMEM177 in a COX20-dependent manner. Interacts with COX20. Interacts with COX16. Cu cation serves as cofactor.

It localises to the mitochondrion inner membrane. It carries out the reaction 4 Fe(II)-[cytochrome c] + O2 + 8 H(+)(in) = 4 Fe(III)-[cytochrome c] + 2 H2O + 4 H(+)(out). Functionally, component of the cytochrome c oxidase, the last enzyme in the mitochondrial electron transport chain which drives oxidative phosphorylation. The respiratory chain contains 3 multisubunit complexes succinate dehydrogenase (complex II, CII), ubiquinol-cytochrome c oxidoreductase (cytochrome b-c1 complex, complex III, CIII) and cytochrome c oxidase (complex IV, CIV), that cooperate to transfer electrons derived from NADH and succinate to molecular oxygen, creating an electrochemical gradient over the inner membrane that drives transmembrane transport and the ATP synthase. Cytochrome c oxidase is the component of the respiratory chain that catalyzes the reduction of oxygen to water. Electrons originating from reduced cytochrome c in the intermembrane space (IMS) are transferred via the dinuclear copper A center (CU(A)) of subunit 2 and heme A of subunit 1 to the active site in subunit 1, a binuclear center (BNC) formed by heme A3 and copper B (CU(B)). The BNC reduces molecular oxygen to 2 water molecules using 4 electrons from cytochrome c in the IMS and 4 protons from the mitochondrial matrix. The chain is Cytochrome c oxidase subunit 2 (MT-CO2) from Dasypus novemcinctus (Nine-banded armadillo).